A 163-amino-acid polypeptide reads, in one-letter code: 6,7-dimethyl-8-ribityllumazine synthase (163 aa).

5-amino-6-(D-ribitylamino)uracil is bound by residues Phe-27, 58–60, and 87–89; these read ALE and CVI. 92–93 provides a ligand contact to (2S)-2-hydroxy-3-oxobutyl phosphate; the sequence is DT. The active-site Proton donor is the His-95. Asn-120 is a 5-amino-6-(D-ribitylamino)uracil binding site. Residue Arg-134 coordinates (2S)-2-hydroxy-3-oxobutyl phosphate.

The protein belongs to the DMRL synthase family.

The enzyme catalyses (2S)-2-hydroxy-3-oxobutyl phosphate + 5-amino-6-(D-ribitylamino)uracil = 6,7-dimethyl-8-(1-D-ribityl)lumazine + phosphate + 2 H2O + H(+). Its pathway is cofactor biosynthesis; riboflavin biosynthesis; riboflavin from 2-hydroxy-3-oxobutyl phosphate and 5-amino-6-(D-ribitylamino)uracil: step 1/2. Functionally, catalyzes the formation of 6,7-dimethyl-8-ribityllumazine by condensation of 5-amino-6-(D-ribitylamino)uracil with 3,4-dihydroxy-2-butanone 4-phosphate. This is the penultimate step in the biosynthesis of riboflavin. The protein is 6,7-dimethyl-8-ribityllumazine synthase of Afipia carboxidovorans (strain ATCC 49405 / DSM 1227 / KCTC 32145 / OM5) (Oligotropha carboxidovorans).